The following is a 277-amino-acid chain: Phosphoenolpyruvate synthase regulatory protein (277 aa).

157–164 (GVSRCGKT) contributes to the ADP binding site.

This sequence belongs to the pyruvate, phosphate/water dikinase regulatory protein family. PSRP subfamily.

The catalysed reaction is [pyruvate, water dikinase] + ADP = [pyruvate, water dikinase]-phosphate + AMP + H(+). The enzyme catalyses [pyruvate, water dikinase]-phosphate + phosphate + H(+) = [pyruvate, water dikinase] + diphosphate. Bifunctional serine/threonine kinase and phosphorylase involved in the regulation of the phosphoenolpyruvate synthase (PEPS) by catalyzing its phosphorylation/dephosphorylation. This Escherichia fergusonii (strain ATCC 35469 / DSM 13698 / CCUG 18766 / IAM 14443 / JCM 21226 / LMG 7866 / NBRC 102419 / NCTC 12128 / CDC 0568-73) protein is Phosphoenolpyruvate synthase regulatory protein.